Reading from the N-terminus, the 75-residue chain is Peptide Ctri10036 (75 aa).

A signal peptide spans 1-22 (MNSKYLFVFLILNVIFIDLCQG). Lys41 carries the lysine amide modification. The propeptide occupies 47 to 75 (ELGSQYDYLQDFRKRELDLDDLLSKFPDY).

It belongs to the non-disulfide-bridged peptide (NDBP) superfamily. Short antimicrobial peptide (group 4) family. Expressed by the venom gland.

Its subcellular location is the secreted. The sequence is that of Peptide Ctri10036 from Chaerilus tricostatus (Scorpion).